A 215-amino-acid polypeptide reads, in one-letter code: Urease accessory protein UreG 2 (215 aa).

A GTP-binding site is contributed by 11 to 18 (GPVGSGKT).

The protein belongs to the SIMIBI class G3E GTPase family. UreG subfamily. Homodimer. UreD, UreF and UreG form a complex that acts as a GTP-hydrolysis-dependent molecular chaperone, activating the urease apoprotein by helping to assemble the nickel containing metallocenter of UreC. The UreE protein probably delivers the nickel.

The protein localises to the cytoplasm. Facilitates the functional incorporation of the urease nickel metallocenter. This process requires GTP hydrolysis, probably effectuated by UreG. This Methylorubrum populi (strain ATCC BAA-705 / NCIMB 13946 / BJ001) (Methylobacterium populi) protein is Urease accessory protein UreG 2.